A 248-amino-acid polypeptide reads, in one-letter code: Adenosylcobinamide-GDP ribazoletransferase (248 aa).

The next 6 helical transmembrane spans lie at Leu28–Leu48, Val103–Val123, Leu126–Val146, Ala169–Met189, Met193–Leu213, and Val225–Ala245.

It belongs to the CobS family. The cofactor is Mg(2+).

Its subcellular location is the cell inner membrane. It carries out the reaction alpha-ribazole + adenosylcob(III)inamide-GDP = adenosylcob(III)alamin + GMP + H(+). The enzyme catalyses alpha-ribazole 5'-phosphate + adenosylcob(III)inamide-GDP = adenosylcob(III)alamin 5'-phosphate + GMP + H(+). Its pathway is cofactor biosynthesis; adenosylcobalamin biosynthesis; adenosylcobalamin from cob(II)yrinate a,c-diamide: step 7/7. Its function is as follows. Joins adenosylcobinamide-GDP and alpha-ribazole to generate adenosylcobalamin (Ado-cobalamin). Also synthesizes adenosylcobalamin 5'-phosphate from adenosylcobinamide-GDP and alpha-ribazole 5'-phosphate. This Chlorobium phaeobacteroides (strain BS1) protein is Adenosylcobinamide-GDP ribazoletransferase.